Here is a 513-residue protein sequence, read N- to C-terminus: Cytochrome P450 monooxygenase orf3 (513 aa).

A helical transmembrane segment spans residues 11 to 31 (LVALGLIAATIIIYSFTLTVY). N-linked (GlcNAc...) asparagine glycosylation is found at Asn211 and Asn351. Cys455 serves as a coordination point for heme.

The protein belongs to the cytochrome P450 family. Requires heme as cofactor.

The protein localises to the membrane. It functions in the pathway mycotoxin biosynthesis. In terms of biological role, cytochrome P450 monooxygenase; part of the gene cluster that mediates the biosynthesis of brefeldin A (BFA), a protein transport inhibitor that shows antiviral, antifungal, and antitumor properties. The proposed biosynthesis of BFA involves formation of an acyclic polyketide chain that is differentially tailored throughout the backbone. The highly reducing polyketide synthase Bref-PKS is proposed to synthesize the precisely reduced octaketide precursor, which could then be directly offloaded by the thiohydrolase enzyme Bref-TH followed by a cytochrome P450 monooxygenase-mediated formation of the cyclopentane ring and macrocyclization to afford 7-deoxy BFA. Alternatively, the first ring annulation can also occur on the ACP-tethered intermediate before the thiohydrolase release and lactonization. The C7-hydroxylation by another cytochrome P450 monooxygenase is believed to be the final step in the process to obtain the final structure of BFA. In addition to the HRPKS Bref-PKS and the thiohydrolase Bref-TH, the brefeldin A biosynthesis cluster contains 4 cytochrome p450 monooxygenases (called orf3 to orf6), as well a the probable cluster-specific transcription regulator orf8. This is Cytochrome P450 monooxygenase orf3 from Eupenicillium brefeldianum (Penicillium brefeldianum).